A 245-amino-acid chain; its full sequence is 14-3-3 protein zeta/delta (245 aa).

N-acetylmethionine is present on methionine 1. An N6-acetyllysine modification is found at lysine 3. Serine 58 is modified (phosphoserine; by PKA). Lysine 68 is modified (N6-acetyllysine). Phosphoserine is present on residues serine 184, serine 207, and serine 210. At threonine 232 the chain carries Phosphothreonine; by CK1.

The protein belongs to the 14-3-3 family. In terms of assembly, interacts with CDK16 and BSPRY. Interacts with WEE1 (C-terminal). Interacts with SAMSN1. Interacts with MLF1 (phosphorylated form); the interaction retains it in the cytoplasm. Interacts with Thr-phosphorylated ITGB2. Interacts with BCL2L11. Homodimer. Heterodimerizes with YWHAE. Homo- and heterodimerization is inhibited by phosphorylation on Ser-58. Interacts with FOXO4, NOXA1, SSH1 and ARHGEF2. Interacts with Pseudomonas aeruginosa exoS (unphosphorylated form). Interacts with BAX; the interaction occurs in the cytoplasm. Under stress conditions, MAPK8-mediated phosphorylation releases BAX to mitochondria. Interacts with phosphorylated RAF1; the interaction is inhibited when YWHAZ is phosphorylated on Thr-232. Interacts with TP53; the interaction enhances p53 transcriptional activity. The Ser-58 phosphorylated form inhibits this interaction and p53 transcriptional activity. Interacts with ABL1 (phosphorylated form); the interaction retains ABL1 in the cytoplasm. Interacts with PKA-phosphorylated AANAT; the interaction modulates AANAT enzymatic activity by increasing affinity for arylalkylamines and acetyl-CoA and protecting the enzyme from dephosphorylation and proteasomal degradation. It may also prevent thiol-dependent inactivation. Interacts with AKT1; the interaction phosphorylates YWHAZ and modulates dimerization. Interacts with GAB2 and TLK2. Interacts with the 'Thr-369' phosphorylated form of DAPK2. Interacts with PI4KB, TBC1D22A and TBC1D22B. Interacts with ZFP36L1 (via phosphorylated form); this interaction occurs in a p38 MAPK- and AKT-signaling pathways. Interacts with SLITRK1. Interacts with AK5, LDB1, MADD, MARK3, PDE1A and SMARCB1. Interacts with YWHAZ. Interacts with MEFV. Interacts with ADAM22 (via C-terminus). The delta, brain-specific form differs from the zeta form in being phosphorylated. Phosphorylation on Ser-184 by MAPK8; promotes dissociation of BAX and translocation of BAX to mitochondria. Phosphorylation on Thr-232; inhibits binding of RAF1. Phosphorylated on Ser-58 by PKA and protein kinase C delta type catalytic subunit in a sphingosine-dependent fashion. Phosphorylation on Ser-58 by PKA; disrupts homodimerization and heterodimerization with YHAE and TP53. As to expression, highly expressed in brain (at protein level).

It is found in the cytoplasm. Its subcellular location is the melanosome. Its function is as follows. Adapter protein implicated in the regulation of a large spectrum of both general and specialized signaling pathways. Binds to a large number of partners, usually by recognition of a phosphoserine or phosphothreonine motif. Binding generally results in the modulation of the activity of the binding partner. Promotes cytosolic retention and inactivation of TFEB transcription factor by binding to phosphorylated TFEB. Induces ARHGEF7 activity on RAC1 as well as lamellipodia and membrane ruffle formation. In neurons, regulates spine maturation through the modulation of ARHGEF7 activity. This chain is 14-3-3 protein zeta/delta (YWHAZ), found in Ovis aries (Sheep).